We begin with the raw amino-acid sequence, 519 residues long: NADH-ubiquinone oxidoreductase chain 4 (519 aa).

The next 14 helical transmembrane spans lie at 2–22 (SGLLYALLIIPMIGIFFILSF), 68–88 (IAFITTIMNLIVSLIIYILFD), 112–132 (VDGLSIYFVLLTTIIMPIALI), 146–166 (LIIILLLETLLLAVFLVLDVL), 167–187 (LFYIFFESILPPLFILIGLFG), 196–216 (FYIFLYTLLGSLFLLLSILTM), 239–259 (IFLFLGVFIAFAVKTPTVFLN), 270–290 (PLGGSIVLAGIVLKLSLYGIF), 304–324 (YTSIIFSIGIITIIYASFSTL), 333–353 (IAYSSVSHAAVYLIGVFSNII), 360–380 (ILLGLGHGFVSSGLFICAGGV), 399–419 (VMPLFSILFFILCLGNCGAPL), 437–457 (LPLLGLFSSSSMIFSAAYTIY), and 484–504 (FFLLFTLIIFTIMFGIYPSFI).

Belongs to the complex I subunit 4 family.

The protein localises to the mitochondrion membrane. The enzyme catalyses a ubiquinone + NADH + 5 H(+)(in) = a ubiquinol + NAD(+) + 4 H(+)(out). In terms of biological role, core subunit of the mitochondrial membrane respiratory chain NADH dehydrogenase (Complex I) that is believed to belong to the minimal assembly required for catalysis. Complex I functions in the transfer of electrons from NADH to the respiratory chain. The immediate electron acceptor for the enzyme is believed to be ubiquinone. In Podospora anserina (strain S / ATCC MYA-4624 / DSM 980 / FGSC 10383) (Pleurage anserina), this protein is NADH-ubiquinone oxidoreductase chain 4 (ND4).